The primary structure comprises 495 residues: GTPase Der (495 aa).

2 EngA-type G domains span residues 3-166 and 208-381; these read PVIA…MDAE and IKLA…DCST. GTP is bound by residues 9–16, 56–60, 118–121, 214–221, 261–265, and 326–329; these read GRPNVGKS, DTGGI, NKTD, DTAGV, and NKWD. The region spanning 382–466 is the KH-like domain; sequence KRVGTSLLTR…PIRIQFKEGE (85 aa).

The protein belongs to the TRAFAC class TrmE-Era-EngA-EngB-Septin-like GTPase superfamily. EngA (Der) GTPase family. Associates with the 50S ribosomal subunit.

Functionally, GTPase that plays an essential role in the late steps of ribosome biogenesis. The protein is GTPase Der of Yersinia pseudotuberculosis serotype IB (strain PB1/+).